The sequence spans 350 residues: Phosphotriesterase-related protein (350 aa).

A divalent metal cation is bound by residues H22, H24, E169, H201, H230, and D298.

The protein belongs to the metallo-dependent hydrolases superfamily. Phosphotriesterase family. It depends on a divalent metal cation as a cofactor.

In Drosophila persimilis (Fruit fly), this protein is Phosphotriesterase-related protein.